The primary structure comprises 299 residues: Recombination-associated protein RdgC (299 aa).

Belongs to the RdgC family.

It localises to the cytoplasm. Its subcellular location is the nucleoid. May be involved in recombination. The chain is Recombination-associated protein RdgC from Bordetella parapertussis (strain 12822 / ATCC BAA-587 / NCTC 13253).